The sequence spans 507 residues: Histidine ammonia-lyase (507 aa).

Positions 141–143 form a cross-link, 5-imidazolinone (Ala-Gly); the sequence is ASG. At Ser-142 the chain carries 2,3-didehydroalanine (Ser).

Belongs to the PAL/histidase family. Post-translationally, contains an active site 4-methylidene-imidazol-5-one (MIO), which is formed autocatalytically by cyclization and dehydration of residues Ala-Ser-Gly.

Its subcellular location is the cytoplasm. The enzyme catalyses L-histidine = trans-urocanate + NH4(+). It functions in the pathway amino-acid degradation; L-histidine degradation into L-glutamate; N-formimidoyl-L-glutamate from L-histidine: step 1/3. This chain is Histidine ammonia-lyase, found in Burkholderia mallei (strain NCTC 10247).